The sequence spans 200 residues: UPF0316 protein SAUSA300_1892 (200 aa).

3 consecutive transmembrane segments (helical) span residues proline 8 to methionine 28, isoleucine 40 to methionine 60, and isoleucine 66 to isoleucine 86.

It belongs to the UPF0316 family.

The protein resides in the cell membrane. In Staphylococcus aureus (strain USA300), this protein is UPF0316 protein SAUSA300_1892.